The following is a 110-amino-acid chain: Small ribosomal subunit protein mS33 (110 aa).

The segment covering 84 to 95 (KRRGKGAPKKMK) has biased composition (basic residues). Residues 84 to 110 (KRRGKGAPKKMKKDAAATAKGKGKKKK) are disordered.

It belongs to the mitochondrion-specific ribosomal protein mS33 family. In terms of assembly, component of the mitochondrial small ribosomal subunit (mt-SSU). Mature yeast 74S mitochondrial ribosomes consist of a small (37S) and a large (54S) subunit. The 37S small subunit contains a 15S ribosomal RNA (15S mt-rRNA) and 34 different proteins. The 54S large subunit contains a 21S rRNA (21S mt-rRNA) and 46 different proteins.

It is found in the mitochondrion. Functionally, component of the mitochondrial ribosome (mitoribosome), a dedicated translation machinery responsible for the synthesis of mitochondrial genome-encoded proteins, including at least some of the essential transmembrane subunits of the mitochondrial respiratory chain. The mitoribosomes are attached to the mitochondrial inner membrane and translation products are cotranslationally integrated into the membrane. The chain is Small ribosomal subunit protein mS33 (RSM27) from Saccharomyces cerevisiae (strain ATCC 204508 / S288c) (Baker's yeast).